A 119-amino-acid chain; its full sequence is uncharacterized protein (119 aa).

Helical transmembrane passes span 28–48, 55–75, and 80–100; these read AWTTGIWLIALCYEIVSHLVF, IEVVHGWVYFVYVLTAFNLAI, and PIGKTVGVLLAGTVPLLGIIV.

The protein to M.tuberculosis Rv1342c.

The protein resides in the cell membrane. This is an uncharacterized protein from Mycobacterium leprae (strain TN).